A 307-amino-acid polypeptide reads, in one-letter code: Heme A synthase (307 aa).

At 1 to 6 (MKFALR) the chain is on the cytoplasmic side. A helical membrane pass occupies residues 7-27 (LLSVITTFVMLIVLIGGALVT). Residues 28–65 (KTGSGLGCGRQWPLCHGRFFPEMNPASIIEWSHRMSTG) lie on the Extracellular side of the membrane. Cys35 and Cys42 are disulfide-bonded. Residue Glu57 is part of the active site. His60 lines the heme o pocket. Residues 66–86 (VSTILVLALAVLCWKKISPVF) traverse the membrane as a helical segment. The Cytoplasmic segment spans residues 87–92 (RETKFL). Residues 93–113 (VIMSIIFLLLQALLGALAVVF) traverse the membrane as a helical segment. Residues 114 to 121 (GSNALVMA) are Extracellular-facing. A helical transmembrane segment spans residues 122–142 (LHFGISLISFASVLLLALLVF). His123 serves as a coordination point for heme o. At 143 to 161 (EATRSETKLVKPLHIGKKM) the chain is on the cytoplasmic side. Residues 162 to 182 (QFHIYGLITYTYIVVYTGAYV) traverse the membrane as a helical segment. Over 183-216 (RHTKSSLACSVFPFCSKDGALPAYFNQWVQMSHR) the chain is Extracellular. Cys191 and Cys197 are disulfide-bonded. Heme b is bound at residue His215. The helical transmembrane segment at 217–237 (AAALLLFVWIFVAMFHAMKHY) threads the bilayer. The Cytoplasmic segment spans residues 238 to 242 (KEQKQ). Residues 243-263 (LYYGWIISAILITLQAISGVM) traverse the membrane as a helical segment. The Extracellular portion of the chain corresponds to 264-274 (SVYSQLALGYA). A helical membrane pass occupies residues 275–295 (LAHSFFISCLFGVLCYFCLLI). His277 is a heme b binding site. Residues 296-307 (ARFKYESKEPFK) lie on the Cytoplasmic side of the membrane.

It belongs to the COX15/CtaA family. Type 1 subfamily. In terms of assembly, interacts with CtaB. It depends on heme b as a cofactor.

The protein resides in the cell membrane. The enzyme catalyses Fe(II)-heme o + 2 A + H2O = Fe(II)-heme a + 2 AH2. The protein operates within porphyrin-containing compound metabolism; heme A biosynthesis; heme A from heme O: step 1/1. Catalyzes the conversion of heme O to heme A by two successive hydroxylations of the methyl group at C8. The first hydroxylation forms heme I, the second hydroxylation results in an unstable dihydroxymethyl group, which spontaneously dehydrates, resulting in the formyl group of heme A. The polypeptide is Heme A synthase (Bacillus pumilus (strain SAFR-032)).